Here is a 326-residue protein sequence, read N- to C-terminus: DNA-directed RNA polymerase subunit alpha (326 aa).

The interval 1–230 (MLKIEKQAKA…LHLDPFLEIG (230 aa)) is alpha N-terminal domain (alpha-NTD). Positions 249 to 326 (DIQVIDDKSH…YDLEKNGSPE (78 aa)) are alpha C-terminal domain (alpha-CTD).

This sequence belongs to the RNA polymerase alpha chain family. Homodimer. The RNAP catalytic core consists of 2 alpha, 1 beta, 1 beta' and 1 omega subunit. When a sigma factor is associated with the core the holoenzyme is formed, which can initiate transcription.

It catalyses the reaction RNA(n) + a ribonucleoside 5'-triphosphate = RNA(n+1) + diphosphate. In terms of biological role, DNA-dependent RNA polymerase catalyzes the transcription of DNA into RNA using the four ribonucleoside triphosphates as substrates. The polypeptide is DNA-directed RNA polymerase subunit alpha (Fusobacterium nucleatum subsp. nucleatum (strain ATCC 25586 / DSM 15643 / BCRC 10681 / CIP 101130 / JCM 8532 / KCTC 2640 / LMG 13131 / VPI 4355)).